The following is a 211-amino-acid chain: MSLGLVGRKCGMTRIFTEDGVSIPVTVVQVEPNKVTQVKTVEKDGYNAIQVTTGFKKRSNVNKPMAGHYAKASVEPGRGLWEFTVDAAAEYQVGSSFDATMFEAGQKVDVRGVSKGKGFQGGVKRHNFATQDATHGNSLSHRVHGSTGQNQTPGRVFKNKKMAGHLGNENVTIQSLEVVRVDAENGLLLLKGGIPGSVGGDIIVTPAVKSW.

The residue at position 151 (Gln-151) is an N5-methylglutamine.

This sequence belongs to the universal ribosomal protein uL3 family. In terms of assembly, part of the 50S ribosomal subunit. Forms a cluster with proteins L14 and L19. In terms of processing, methylated by PrmB.

In terms of biological role, one of the primary rRNA binding proteins, it binds directly near the 3'-end of the 23S rRNA, where it nucleates assembly of the 50S subunit. The sequence is that of Large ribosomal subunit protein uL3 from Francisella tularensis subsp. tularensis (strain FSC 198).